Here is a 210-residue protein sequence, read N- to C-terminus: ATP-dependent Clp protease proteolytic subunit (210 aa).

The active-site Nucleophile is serine 106. Histidine 131 is a catalytic residue.

This sequence belongs to the peptidase S14 family. As to quaternary structure, fourteen ClpP subunits assemble into 2 heptameric rings which stack back to back to give a disk-like structure with a central cavity, resembling the structure of eukaryotic proteasomes.

The protein localises to the cytoplasm. The enzyme catalyses Hydrolysis of proteins to small peptides in the presence of ATP and magnesium. alpha-casein is the usual test substrate. In the absence of ATP, only oligopeptides shorter than five residues are hydrolyzed (such as succinyl-Leu-Tyr-|-NHMec, and Leu-Tyr-Leu-|-Tyr-Trp, in which cleavage of the -Tyr-|-Leu- and -Tyr-|-Trp bonds also occurs).. Its function is as follows. Cleaves peptides in various proteins in a process that requires ATP hydrolysis. Has a chymotrypsin-like activity. Plays a major role in the degradation of misfolded proteins. The sequence is that of ATP-dependent Clp protease proteolytic subunit from Rhodopseudomonas palustris (strain BisB18).